Consider the following 155-residue polypeptide: SsrA-binding protein (155 aa).

A compositionally biased stretch (basic and acidic residues) spans 132-147 (KRESIKRREQDRDIKR). Positions 132–155 (KRESIKRREQDRDIKRQMKQFNGR) are disordered.

It belongs to the SmpB family.

It localises to the cytoplasm. In terms of biological role, required for rescue of stalled ribosomes mediated by trans-translation. Binds to transfer-messenger RNA (tmRNA), required for stable association of tmRNA with ribosomes. tmRNA and SmpB together mimic tRNA shape, replacing the anticodon stem-loop with SmpB. tmRNA is encoded by the ssrA gene; the 2 termini fold to resemble tRNA(Ala) and it encodes a 'tag peptide', a short internal open reading frame. During trans-translation Ala-aminoacylated tmRNA acts like a tRNA, entering the A-site of stalled ribosomes, displacing the stalled mRNA. The ribosome then switches to translate the ORF on the tmRNA; the nascent peptide is terminated with the 'tag peptide' encoded by the tmRNA and targeted for degradation. The ribosome is freed to recommence translation, which seems to be the essential function of trans-translation. The chain is SsrA-binding protein from Streptococcus mutans serotype c (strain ATCC 700610 / UA159).